The following is a 301-amino-acid chain: GTPase Era (301 aa).

Residues 7–175 (YCGFIAIVGR…AAIVRKHLPE (169 aa)) enclose the Era-type G domain. Residues 15-22 (GRPNVGKS) are G1. GTP is bound at residue 15-22 (GRPNVGKS). Residues 41–45 (QTTRH) are G2. Positions 62 to 65 (DTPG) are G3. Residues 62–66 (DTPGL) and 124–127 (NKVD) each bind GTP. A G4 region spans residues 124 to 127 (NKVD). Residues 154-156 (ISA) are G5. The 78-residue stretch at 206-283 (LGAELPYSVT…HLELWVKVKS (78 aa)) folds into the KH type-2 domain.

Belongs to the TRAFAC class TrmE-Era-EngA-EngB-Septin-like GTPase superfamily. Era GTPase family. As to quaternary structure, monomer.

Its subcellular location is the cytoplasm. The protein resides in the cell inner membrane. Its function is as follows. An essential GTPase that binds both GDP and GTP, with rapid nucleotide exchange. Plays a role in 16S rRNA processing and 30S ribosomal subunit biogenesis and possibly also in cell cycle regulation and energy metabolism. This chain is GTPase Era, found in Escherichia coli O157:H7.